The primary structure comprises 397 residues: 1-carboxy-3-chloro-3,4-dihydroxycyclo hexa-1,5-diene dehydrogenase (397 aa).

The protein to P.putida PHT4.

This chain is 1-carboxy-3-chloro-3,4-dihydroxycyclo hexa-1,5-diene dehydrogenase (cbaC), found in Comamonas testosteroni (Pseudomonas testosteroni).